The primary structure comprises 188 residues: Ribonuclease HII (188 aa).

Residues Lys-6 to Phe-188 enclose the RNase H type-2 domain. A divalent metal cation is bound by residues Asp-12, Glu-13, and Asp-99.

The protein belongs to the RNase HII family. Requires Mn(2+) as cofactor. It depends on Mg(2+) as a cofactor.

The protein resides in the cytoplasm. It catalyses the reaction Endonucleolytic cleavage to 5'-phosphomonoester.. Endonuclease that specifically degrades the RNA of RNA-DNA hybrids. The chain is Ribonuclease HII from Sulfurovum sp. (strain NBC37-1).